We begin with the raw amino-acid sequence, 218 residues long: N-(5'-phosphoribosyl)anthranilate isomerase (218 aa).

Belongs to the TrpF family.

It catalyses the reaction N-(5-phospho-beta-D-ribosyl)anthranilate = 1-(2-carboxyphenylamino)-1-deoxy-D-ribulose 5-phosphate. It participates in amino-acid biosynthesis; L-tryptophan biosynthesis; L-tryptophan from chorismate: step 3/5. The protein is N-(5'-phosphoribosyl)anthranilate isomerase of Halalkalibacterium halodurans (strain ATCC BAA-125 / DSM 18197 / FERM 7344 / JCM 9153 / C-125) (Bacillus halodurans).